The chain runs to 489 residues: WD repeat-containing protein JIP5 (489 aa).

One copy of the WD 1 repeat lies at 4 to 45 (PLSSDALDLCFHPAAETNLLAVGLISGKIQLINYDDYLSSPS). The interval 46-66 (SSRTPLAPPSKKSKPSTISSA) is disordered. Residues 124–163 (EVHDAAPSRVLPVDESLVVTGDDDGVVRLWDVRKGGGKGI) form a WD 2 repeat. The segment at 192–246 (SIKEAKKSKTQLKKQRRRARQAERLKEHDKEKREQNASDTEASEPDSEDDAAIKV) is disordered. Over residues 199-210 (SKTQLKKQRRRA) the composition is skewed to basic residues. Residues 211–227 (RQAERLKEHDKEKREQN) show a composition bias toward basic and acidic residues. A compositionally biased stretch (acidic residues) spans 232 to 241 (EASEPDSEDD). 2 WD repeats span residues 279–318 (DQED…LDHV) and 323–363 (GHPA…GVIA). Residues 417-489 (IVGLAEDDSD…AGKGGFFSDL (73 aa)) form a disordered region. 2 stretches are compositionally biased toward acidic residues: residues 421-440 (AEDD…DDDD) and 449-472 (DGAE…DSED).

It belongs to the WD repeat WDR55 family.

It localises to the nucleus. The protein resides in the nucleolus. In Mycosarcoma maydis (Corn smut fungus), this protein is WD repeat-containing protein JIP5 (JIP5).